The chain runs to 730 residues: Ribosomal RNA large subunit methyltransferase K/L (730 aa).

One can recognise a THUMP domain in the interval 46–157 (TAYRLCVWSR…RGEAILSLDL (112 aa)). A disordered region spans residues 394-418 (GERREAQPEGTEARQQVPQASEPAR).

The protein belongs to the methyltransferase superfamily. RlmKL family.

Its subcellular location is the cytoplasm. It carries out the reaction guanosine(2445) in 23S rRNA + S-adenosyl-L-methionine = N(2)-methylguanosine(2445) in 23S rRNA + S-adenosyl-L-homocysteine + H(+). It catalyses the reaction guanosine(2069) in 23S rRNA + S-adenosyl-L-methionine = N(2)-methylguanosine(2069) in 23S rRNA + S-adenosyl-L-homocysteine + H(+). Its function is as follows. Specifically methylates the guanine in position 2445 (m2G2445) and the guanine in position 2069 (m7G2069) of 23S rRNA. This is Ribosomal RNA large subunit methyltransferase K/L from Pseudomonas putida (strain ATCC 47054 / DSM 6125 / CFBP 8728 / NCIMB 11950 / KT2440).